The following is a 129-amino-acid chain: Large ribosomal subunit protein bL20 (129 aa).

Belongs to the bacterial ribosomal protein bL20 family.

Functionally, binds directly to 23S ribosomal RNA and is necessary for the in vitro assembly process of the 50S ribosomal subunit. It is not involved in the protein synthesizing functions of that subunit. The chain is Large ribosomal subunit protein bL20 from Mycobacterium leprae (strain Br4923).